The primary structure comprises 215 residues: Mediator of RNA polymerase II transcription subunit 20 (215 aa).

It belongs to the Mediator complex subunit 20 family. Component of the Mediator complex.

It is found in the nucleus. Its function is as follows. Component of the Mediator complex, a coactivator involved in the regulated transcription of nearly all RNA polymerase II-dependent genes. Mediator functions as a bridge to convey information from gene-specific regulatory proteins to the basal RNA polymerase II transcription machinery. Mediator is recruited to promoters by direct interactions with regulatory proteins and serves as a scaffold for the assembly of a functional preinitiation complex with RNA polymerase II and the general transcription factors. The sequence is that of Mediator of RNA polymerase II transcription subunit 20 (SRB2) from Candida glabrata (strain ATCC 2001 / BCRC 20586 / JCM 3761 / NBRC 0622 / NRRL Y-65 / CBS 138) (Yeast).